We begin with the raw amino-acid sequence, 390 residues long: Enoyl-[acyl-carrier-protein] reductase [NADH], chloroplastic (390 aa).

A chloroplast-targeting transit peptide spans 1-74 (MAATAASSLQ…CKRPFSFSTR (74 aa)). 2 residues coordinate NADP(+): leucine 53 and asparagine 170. The Proton donor role is filled by serine 239. Residues lysine 282 and serine 314 each contribute to the NADP(+) site. The Lowers pKa of active site Tyr role is filled by lysine 282.

Belongs to the short-chain dehydrogenases/reductases (SDR) family. FabI subfamily. In terms of assembly, homotetramer. Expressed in flowers and siliques and at lower levels in roots and leaves (at protein level).

The protein localises to the plastid. It localises to the chloroplast. The catalysed reaction is a 2,3-saturated acyl-[ACP] + NAD(+) = a (2E)-enoyl-[ACP] + NADH + H(+). It functions in the pathway lipid metabolism; fatty acid biosynthesis. With respect to regulation, inhibited by the phytotoxin cyperin and the synthetic antimicrobial compound triclosan. Functionally, catalyzes the NAD-dependent reduction of a carbon-carbon double bond in an enoyl moiety that is covalently linked to an acyl carrier protein (ACP). Catalyzes the last reduction step in the de novo synthesis cycle of fatty acids. Involved in the elongation cycle of fatty acids which are used in lipid metabolism. Required for normal plant growth. In Arabidopsis thaliana (Mouse-ear cress), this protein is Enoyl-[acyl-carrier-protein] reductase [NADH], chloroplastic (MOD1).